The sequence spans 227 residues: Urease accessory protein UreF (227 aa).

Belongs to the UreF family. In terms of assembly, ureD, UreF and UreG form a complex that acts as a GTP-hydrolysis-dependent molecular chaperone, activating the urease apoprotein by helping to assemble the nickel containing metallocenter of UreC. The UreE protein probably delivers the nickel.

The protein localises to the cytoplasm. Functionally, required for maturation of urease via the functional incorporation of the urease nickel metallocenter. The protein is Urease accessory protein UreF of Blochmanniella floridana.